The chain runs to 302 residues: Sulfate adenylyltransferase subunit 2 (302 aa).

Belongs to the PAPS reductase family. CysD subfamily. Heterodimer composed of CysD, the smaller subunit, and CysN.

It carries out the reaction sulfate + ATP + H(+) = adenosine 5'-phosphosulfate + diphosphate. It participates in sulfur metabolism; hydrogen sulfide biosynthesis; sulfite from sulfate: step 1/3. Functionally, with CysN forms the ATP sulfurylase (ATPS) that catalyzes the adenylation of sulfate producing adenosine 5'-phosphosulfate (APS) and diphosphate, the first enzymatic step in sulfur assimilation pathway. APS synthesis involves the formation of a high-energy phosphoric-sulfuric acid anhydride bond driven by GTP hydrolysis by CysN coupled to ATP hydrolysis by CysD. The polypeptide is Sulfate adenylyltransferase subunit 2 (Psychromonas ingrahamii (strain DSM 17664 / CCUG 51855 / 37)).